Here is an 85-residue protein sequence, read N- to C-terminus: PI-stichotoxin-Hcr2i (85 aa).

A signal peptide spans 1-22 (MKGTFLICLILIAGFYFRSIQG). The propeptide occupies 23–29 (FYFKRIQ). One can recognise a BPTI/Kunitz inhibitor domain in the interval 33 to 83 (CSEPKKVGRCRGSFPRFYFDSETGKCTPFIYGGCGGNGNNFETLHACRAIC). 3 disulfide bridges follow: C33–C83, C42–C66, and C58–C79.

Belongs to the venom Kunitz-type family. Sea anemone type 2 potassium channel toxin subfamily.

The protein resides in the secreted. The protein localises to the nematocyst. In terms of biological role, serine protease inhibitor that also shows protective effect in a cytotoxicity model. It binds to all proteases tested (trypsin (Ki=52 nM), alpha-chymotrypsin, cathepsin G, kallikrein, and human neutrophil elastase). It significantly increases neuroblastoma cell viability in an in vitro neurotoxicity model, being a consequence of an effective decrease of reactive oxygen species (ROS) level in the cells. It also seems to protect cells by inhibiting ATP-induced purinoceptor (P2RX7) activation. The protein is PI-stichotoxin-Hcr2i of Radianthus crispa (Leathery sea anemone).